The following is a 374-amino-acid chain: 4-hydroxy-3-methylbut-2-en-1-yl diphosphate synthase (flavodoxin) (374 aa).

C272, C275, C307, and E314 together coordinate [4Fe-4S] cluster.

This sequence belongs to the IspG family. Requires [4Fe-4S] cluster as cofactor.

It catalyses the reaction (2E)-4-hydroxy-3-methylbut-2-enyl diphosphate + oxidized [flavodoxin] + H2O + 2 H(+) = 2-C-methyl-D-erythritol 2,4-cyclic diphosphate + reduced [flavodoxin]. It participates in isoprenoid biosynthesis; isopentenyl diphosphate biosynthesis via DXP pathway; isopentenyl diphosphate from 1-deoxy-D-xylulose 5-phosphate: step 5/6. Its function is as follows. Converts 2C-methyl-D-erythritol 2,4-cyclodiphosphate (ME-2,4cPP) into 1-hydroxy-2-methyl-2-(E)-butenyl 4-diphosphate. The sequence is that of 4-hydroxy-3-methylbut-2-en-1-yl diphosphate synthase (flavodoxin) from Acidiphilium cryptum (strain JF-5).